A 479-amino-acid polypeptide reads, in one-letter code: Glutamate--tRNA ligase (479 aa).

The 'HIGH' region motif lies at Pro-9 to Thr-19. Residues Lys-248 to Arg-252 carry the 'KMSKS' region motif. Lys-251 contacts ATP.

The protein belongs to the class-I aminoacyl-tRNA synthetase family. Glutamate--tRNA ligase type 1 subfamily. As to quaternary structure, monomer.

Its subcellular location is the cytoplasm. It carries out the reaction tRNA(Glu) + L-glutamate + ATP = L-glutamyl-tRNA(Glu) + AMP + diphosphate. Catalyzes the attachment of glutamate to tRNA(Glu) in a two-step reaction: glutamate is first activated by ATP to form Glu-AMP and then transferred to the acceptor end of tRNA(Glu). This Prochlorococcus marinus (strain MIT 9312) protein is Glutamate--tRNA ligase.